Reading from the N-terminus, the 312-residue chain is Beta-ketoacyl-[acyl-carrier-protein] synthase III (312 aa).

Catalysis depends on residues cysteine 112 and histidine 237. The tract at residues 238–242 (QANIR) is ACP-binding. Asparagine 267 is an active-site residue.

It belongs to the thiolase-like superfamily. FabH family. In terms of assembly, homodimer.

The protein localises to the cytoplasm. The enzyme catalyses malonyl-[ACP] + acetyl-CoA + H(+) = 3-oxobutanoyl-[ACP] + CO2 + CoA. Its pathway is lipid metabolism; fatty acid biosynthesis. Catalyzes the condensation reaction of fatty acid synthesis by the addition to an acyl acceptor of two carbons from malonyl-ACP. Catalyzes the first condensation reaction which initiates fatty acid synthesis and may therefore play a role in governing the total rate of fatty acid production. Possesses both acetoacetyl-ACP synthase and acetyl transacylase activities. Its substrate specificity determines the biosynthesis of branched-chain and/or straight-chain of fatty acids. This chain is Beta-ketoacyl-[acyl-carrier-protein] synthase III, found in Oceanobacillus iheyensis (strain DSM 14371 / CIP 107618 / JCM 11309 / KCTC 3954 / HTE831).